An 89-amino-acid polypeptide reads, in one-letter code: Small ribosomal subunit protein uS15 (89 aa).

Residues 1–21 (MSVDAETKTKIIKDNARDKND) are compositionally biased toward basic and acidic residues. Residues 1 to 26 (MSVDAETKTKIIKDNARDKNDTGSPE) are disordered.

Belongs to the universal ribosomal protein uS15 family. As to quaternary structure, part of the 30S ribosomal subunit. Forms a bridge to the 50S subunit in the 70S ribosome, contacting the 23S rRNA.

In terms of biological role, one of the primary rRNA binding proteins, it binds directly to 16S rRNA where it helps nucleate assembly of the platform of the 30S subunit by binding and bridging several RNA helices of the 16S rRNA. Functionally, forms an intersubunit bridge (bridge B4) with the 23S rRNA of the 50S subunit in the ribosome. The sequence is that of Small ribosomal subunit protein uS15 from Erythrobacter litoralis (strain HTCC2594).